Consider the following 540-residue polypeptide: Phosphoenolpyruvate carboxykinase (ATP) (540 aa).

Arginine 65 provides a ligand contact to substrate. Position 87 is an N6-acetyllysine (lysine 87). Tyrosine 207 and lysine 213 together coordinate substrate. Residues lysine 213, histidine 232, and 248-256 (GLSGTGKTT) contribute to the ATP site. Mn(2+) contacts are provided by lysine 213 and histidine 232. Aspartate 269 is a Mn(2+) binding site. Residues glutamate 297, arginine 333, 449–450 (RI), and threonine 455 contribute to the ATP site. Arginine 333 is a binding site for substrate. Residue lysine 523 is modified to N6-acetyllysine.

This sequence belongs to the phosphoenolpyruvate carboxykinase (ATP) family. In terms of assembly, monomer. It depends on Mn(2+) as a cofactor.

The protein resides in the cytoplasm. The enzyme catalyses oxaloacetate + ATP = phosphoenolpyruvate + ADP + CO2. It participates in carbohydrate biosynthesis; gluconeogenesis. Functionally, involved in the gluconeogenesis. Catalyzes the conversion of oxaloacetate (OAA) to phosphoenolpyruvate (PEP) through direct phosphoryl transfer between the nucleoside triphosphate and OAA. This Escherichia coli O127:H6 (strain E2348/69 / EPEC) protein is Phosphoenolpyruvate carboxykinase (ATP).